A 140-amino-acid polypeptide reads, in one-letter code: Nucleoside diphosphate kinase (140 aa).

Lysine 11, phenylalanine 59, arginine 87, threonine 93, arginine 104, and asparagine 114 together coordinate ATP. Residue histidine 117 is the Pros-phosphohistidine intermediate of the active site.

This sequence belongs to the NDK family. In terms of assembly, homotetramer. Mg(2+) serves as cofactor.

The protein resides in the cytoplasm. It carries out the reaction a 2'-deoxyribonucleoside 5'-diphosphate + ATP = a 2'-deoxyribonucleoside 5'-triphosphate + ADP. The catalysed reaction is a ribonucleoside 5'-diphosphate + ATP = a ribonucleoside 5'-triphosphate + ADP. Major role in the synthesis of nucleoside triphosphates other than ATP. The ATP gamma phosphate is transferred to the NDP beta phosphate via a ping-pong mechanism, using a phosphorylated active-site intermediate. The sequence is that of Nucleoside diphosphate kinase from Brucella melitensis biotype 1 (strain ATCC 23456 / CCUG 17765 / NCTC 10094 / 16M).